The chain runs to 509 residues: Probable cation transporter HKT2;3 (509 aa).

Residues 1 to 32 are Cytoplasmic-facing; it reads MPIRLHIFVNSARHAINSSAFICRFIAYHLSP. The next 2 helical transmembrane spans lie at 33 to 53 and 96 to 116; these read LLIH…SLVV and ILTL…GLVL. The Cytoplasmic portion of the chain corresponds to 117–164; sequence ESSKQNKHDPENRRVSSVTVCKQSQLEEATPQTPSMNSIDIKKRCLKY. 2 consecutive transmembrane segments (helical) span residues 165 to 185 and 237 to 257; these read LVFV…LLVF and GLLL…PVFL. The Cytoplasmic portion of the chain corresponds to 258–296; that stretch reads RLVIWALRGLRLAKAEEPDFMMNNSSAVGFSHLLPNLQT. 2 helical membrane passes run 297-317 and 353-373; these read IFLA…FCCL and CSLV…TPSL. The Cytoplasmic portion of the chain corresponds to 374 to 400; it reads TKLFSACQDHKRIGPESDDRTSKGKPF. Transmembrane regions (helical) follow at residues 401–421 and 474–494; these read LKMM…LVCI and AYNF…LAML. Over 495-509 the chain is Cytoplasmic; the sequence is CGRLNSKDSTSARTR.

It belongs to the TrkH potassium transport family. HKT (TC 2.A.38.3) subfamily.

It localises to the membrane. Probable cation transporter. May be involved in regulation of potassium-sodium homeostasis. The polypeptide is Probable cation transporter HKT2;3 (Oryza sativa subsp. japonica (Rice)).